Consider the following 1278-residue polypeptide: Cytoplasmic FMR1-interacting protein 2 (1278 aa).

An N6-acetyllysine modification is found at lysine 1062.

Belongs to the CYFIP family. Component of the WAVE1 complex composed of ABI2, CYFIP2, BRK1, NCKAP1 and WASF1/WAVE1. Interacts with FMR1, FXR1 and FXR2. Interacts with FMR1 isoform 6; the interaction occurs in a RNA-dependent manner. Interacts with RAC1 (activated form) which causes the complex to dissociate, releasing activated WASF1. The complex can also be activated by NCK1. Interacts with SHANK3; the interaction mediates the association of SHANK3 with the WAVE1 complex. Interacts with TMEM108 (via N-terminus); the interaction associates TMEM108 with the WAVE1 complex. As to expression, expressed in T-cells. Increased expression is observed in CD4(+) T-lymphocytes from patients with multiple sclerosis (at protein level).

It is found in the cytoplasm. The protein resides in the nucleus. Its subcellular location is the perinuclear region. The protein localises to the synapse. It localises to the synaptosome. Its function is as follows. Involved in T-cell adhesion and p53/TP53-dependent induction of apoptosis. Does not bind RNA. As component of the WAVE1 complex, required for BDNF-NTRK2 endocytic trafficking and signaling from early endosomes. The chain is Cytoplasmic FMR1-interacting protein 2 from Homo sapiens (Human).